The sequence spans 251 residues: Phosphate import ATP-binding protein PstB 2 (251 aa).

One can recognise an ABC transporter domain in the interval 6 to 246; that stretch reads FNIENLDLFY…PRDDRTRGYV (241 aa). An ATP-binding site is contributed by 38 to 45; the sequence is GPSGCGKS.

The protein belongs to the ABC transporter superfamily. Phosphate importer (TC 3.A.1.7) family. The complex is composed of two ATP-binding proteins (PstB), two transmembrane proteins (PstC and PstA) and a solute-binding protein (PstS).

It localises to the cell inner membrane. The catalysed reaction is phosphate(out) + ATP + H2O = ADP + 2 phosphate(in) + H(+). Part of the ABC transporter complex PstSACB involved in phosphate import. Responsible for energy coupling to the transport system. This chain is Phosphate import ATP-binding protein PstB 2, found in Vibrio cholerae serotype O1 (strain ATCC 39315 / El Tor Inaba N16961).